The primary structure comprises 162 residues: Phenazine biosynthesis protein PhzB1 (162 aa).

It belongs to the PhzA/PhzB family. Homodimer.

Its pathway is antibiotic biosynthesis; phenazine biosynthesis. In terms of biological role, involved in the biosynthesis of the antibiotic phenazine, a nitrogen-containing heterocyclic molecule. PhzB1 (operon phzA1B1C1E1F1G1) has a role in the biosynthesis of the phenazine during planktonic growth. The chain is Phenazine biosynthesis protein PhzB1 from Pseudomonas aeruginosa (strain ATCC 15692 / DSM 22644 / CIP 104116 / JCM 14847 / LMG 12228 / 1C / PRS 101 / PAO1).